The chain runs to 485 residues: Rhamnulokinase (485 aa).

ATP is bound at residue 8–12 (ASSGR). Substrate contacts are provided by residues Gly78 and 231 to 233 (HDT). Asp232 (proton acceptor) is an active-site residue. Thr254 is a binding site for ATP. A substrate-binding site is contributed by Asn291. Residue Gln299 participates in ATP binding. An intrachain disulfide couples Cys348 to Cys365. Gly397 provides a ligand contact to ATP. Residues Cys408 and Cys412 are joined by a disulfide bond.

It belongs to the rhamnulokinase family. Requires Mg(2+) as cofactor.

The catalysed reaction is L-rhamnulose + ATP = L-rhamnulose 1-phosphate + ADP + H(+). Its pathway is carbohydrate degradation; L-rhamnose degradation; glycerone phosphate from L-rhamnose: step 2/3. In terms of biological role, involved in the catabolism of L-rhamnose (6-deoxy-L-mannose). Catalyzes the transfer of the gamma-phosphate group from ATP to the 1-hydroxyl group of L-rhamnulose to yield L-rhamnulose 1-phosphate. The chain is Rhamnulokinase from Yersinia pestis bv. Antiqua (strain Antiqua).